The primary structure comprises 346 residues: 3 beta-hydroxysteroid dehydrogenase/Delta 5--&gt;4-isomerase (346 aa).

The active-site Proton acceptor is the Y147. K151 lines the NAD(+) pocket.

The protein belongs to the 3-beta-HSD family.

The catalysed reaction is a 3beta-hydroxy-Delta(5)-steroid + NAD(+) = a 3-oxo-Delta(5)-steroid + NADH + H(+). The enzyme catalyses a 3-oxo-Delta(5)-steroid = a 3-oxo-Delta(4)-steroid. The protein operates within lipid metabolism; steroid biosynthesis. In terms of biological role, catalyzes the oxidative conversion of Delta(5)-ene-3-beta-hydroxy steroid, and the oxidative conversion of ketosteroids. The 3-beta-HSD enzymatic system plays a crucial role in the biosynthesis of all classes of hormonal steroids. During viral infection, steroid production contributes to virulence by inhibiting the host inflammatory response. In Vaccinia virus (strain Western Reserve) (VACV), this protein is 3 beta-hydroxysteroid dehydrogenase/Delta 5--&gt;4-isomerase (OPG174).